The following is a 278-amino-acid chain: Envelope glycoprotein L (278 aa).

Positions 1 to 30 (MCRRPDCGFSFSPGPVILLWCCLLLPIVSS) are cleaved as a signal peptide. Positions 43–256 (VPAECPELTR…DKYYAGLPPE (214 aa)) constitute a gL betaherpesvirus-type domain. Residues C154 and C159 are joined by a disulfide bond.

Belongs to the herpesviridae glycoprotein L (gL) family. Betaherpesvirinae gL subfamily. In terms of assembly, interacts with glycoprotein H (gH); this interaction is necessary for the correct processing and cell surface expression of gH. Forms the envelope pentamer complex (PC) composed of gH, gL, UL128, UL130, and UL131A. The pentamer interacts with host NRP2. Forms the envelope trimer complex composed of gH, gL, and gO. The trimer interacts with host PDGFRA.

The protein resides in the virion membrane. The protein localises to the host cell membrane. It localises to the host Golgi apparatus. Its subcellular location is the host trans-Golgi network. The heterodimer glycoprotein H-glycoprotein L is required for the fusion of viral and plasma membranes leading to virus entry into the host cell. Acts as a functional inhibitor of gH and maintains gH in an inhibited form. Upon binding to host integrins, gL dissociates from gH leading to activation of the viral fusion glycoproteins gB and gH. In human cytomegalovirus, forms two distincts complexes to mediate viral entry, a trimer and a pentamer at the surface of the virion envelope. The gH-gL-gO trimer is required for infection in fibroblasts by interacting with host PDGFRA. The gH-gL-UL128-UL130-UL131A pentamer is essential for viral entry in epithelial, endothelial and myeloid cells via interaction with host NRP2. The polypeptide is Envelope glycoprotein L (Human cytomegalovirus (strain PT) (HHV-5)).